The primary structure comprises 473 residues: MLKQQVGVIGMAVMGRNLALNIESKKYTVSIFNRTQSVTEEVINNNKEKKIFPYFSIKDFVNSLRKPRCILLMVKSGQPTDETIQFILPYLNKGDILIDGGNTFYKDSIRRSNDLMKCGINFIGMGVSGGELGALNGPSIMPGGSREAYDLVSSMLKKISAKFKNEPCVSYIGPNGAGHYVKMIHNGIEYGDMQLISESYFILKNVLNMKNEELSNTFSQWNKGELNSYLIEITKNIFLKKEKDGIHYLIDSILDHAEDKGTGKWISQDALELHEPLSLITESVFARYLSSLKDQRLIASKILKGPILKCISSQNKELFVEEVRRALYLGKIISYAQGFSQLKKASEKYSWNLQYGKIAKIFRAGCIIRADFLERITDAFKSNNVTNLLLTPYFSEISNKYEKSLRYITSYAIKYGIPVPTFASAISYYDNYRTMSSSANLIQAQRDYFGAHTYRRTDKKGYFHTNWLTKKEL.

Residues 10-15 (GMAVMG), 33-35 (NRT), 74-76 (VKS), and asparagine 102 contribute to the NADP(+) site. Substrate is bound by residues asparagine 102 and 128–130 (SGG). Lysine 182 functions as the Proton acceptor in the catalytic mechanism. 185-186 (HN) lines the substrate pocket. Glutamate 189 (proton donor) is an active-site residue. Positions 190, 260, 287, 446, and 452 each coordinate substrate.

It belongs to the 6-phosphogluconate dehydrogenase family. Homodimer.

The catalysed reaction is 6-phospho-D-gluconate + NADP(+) = D-ribulose 5-phosphate + CO2 + NADPH. It functions in the pathway carbohydrate degradation; pentose phosphate pathway; D-ribulose 5-phosphate from D-glucose 6-phosphate (oxidative stage): step 3/3. Functionally, catalyzes the oxidative decarboxylation of 6-phosphogluconate to ribulose 5-phosphate and CO(2), with concomitant reduction of NADP to NADPH. This Buchnera aphidicola subsp. Schizaphis graminum (strain Sg) protein is 6-phosphogluconate dehydrogenase, decarboxylating (gnd).